A 297-amino-acid chain; its full sequence is MGFVKVVKNKAYFKRYQVKFRRRREGKTDYYARKRLVIQDKNKYNTPKYRMIVRVTNRDIICQIAYARIEGDMIVCAAYAHELPKYGVKVGLTNYAAAYCTGLLLARRLLNRFGMDKIYEGQVEVTGDEYNVESIDGQPGAFTCYLDAGLARTTTGNKVFGALKGAVDGGLSIPHSTKRFPGYDSESKEFSAEVHRKHIMGQNVADYMRYLIEEDEDAYKKQFSQYIKNNVTPDMMEEMYKKAHAAIRENPVYEKKPKKEVKKKRWNRPKMSLAQKKDRVAQKKASFLRAQERAAES.

G2 is modified (N-acetylglycine). N6-acetyllysine is present on residues K5 and K48. S185 carries the phosphoserine modification. K220 carries the post-translational modification N6-acetyllysine; alternate. K220 is covalently cross-linked (Glycyl lysine isopeptide (Lys-Gly) (interchain with G-Cter in SUMO1); alternate). K220 participates in a covalent cross-link: Glycyl lysine isopeptide (Lys-Gly) (interchain with G-Cter in SUMO2); alternate. Phosphothreonine is present on T232. The segment at 252–297 (VYEKKPKKEVKKKRWNRPKMSLAQKKDRVAQKKASFLRAQERAAES) is disordered. A compositionally biased stretch (basic residues) spans 258–268 (KKEVKKKRWNR). The residue at position 272 (S272) is a Phosphoserine.

The protein belongs to the universal ribosomal protein uL18 family. As to quaternary structure, component of the large ribosomal subunit (LSU). Part of the 5S RNP complex, which is a LSU subcomplex composed of the 5S RNA, RPL5 and RPL11. Component of a hexameric 5S RNP precursor complex, composed of 5S RNA, RRS1, RPF2/BXDC1, RPL5, RPL11 and HEATR3; this complex acts as a precursor for ribosome assembly. Interacts with NVL in an ATP-dependent manner. Interacts with RRP1B. Interacts with IPO5, IPO7 and KPNB1; these interactions may be involved in RPL5 nuclear import for the assembly of ribosomal subunits.

Its subcellular location is the cytoplasm. The protein localises to the nucleus. It is found in the nucleolus. Functionally, component of the ribosome, a large ribonucleoprotein complex responsible for the synthesis of proteins in the cell. The small ribosomal subunit (SSU) binds messenger RNAs (mRNAs) and translates the encoded message by selecting cognate aminoacyl-transfer RNA (tRNA) molecules. The large subunit (LSU) contains the ribosomal catalytic site termed the peptidyl transferase center (PTC), which catalyzes the formation of peptide bonds, thereby polymerizing the amino acids delivered by tRNAs into a polypeptide chain. The nascent polypeptides leave the ribosome through a tunnel in the LSU and interact with protein factors that function in enzymatic processing, targeting, and the membrane insertion of nascent chains at the exit of the ribosomal tunnel. As part of the 5S RNP/5S ribonucleoprotein particle it is an essential component of the LSU, required for its formation and the maturation of rRNAs. It also couples ribosome biogenesis to p53/TP53 activation. As part of the 5S RNP it accumulates in the nucleoplasm and inhibits MDM2, when ribosome biogenesis is perturbed, mediating the stabilization and the activation of TP53. In Bos taurus (Bovine), this protein is Large ribosomal subunit protein uL18 (RPL5).